We begin with the raw amino-acid sequence, 209 residues long: Thiamine-phosphate synthase (209 aa).

4-amino-2-methyl-5-(diphosphooxymethyl)pyrimidine contacts are provided by residues 36 to 40 (QYRDK) and N68. 2 residues coordinate Mg(2+): D69 and D87. Residue T106 participates in 4-amino-2-methyl-5-(diphosphooxymethyl)pyrimidine binding. 133 to 135 (SST) contributes to the 2-[(2R,5Z)-2-carboxy-4-methylthiazol-5(2H)-ylidene]ethyl phosphate binding site. Residue K136 coordinates 4-amino-2-methyl-5-(diphosphooxymethyl)pyrimidine. G163 serves as a coordination point for 2-[(2R,5Z)-2-carboxy-4-methylthiazol-5(2H)-ylidene]ethyl phosphate.

This sequence belongs to the thiamine-phosphate synthase family. Mg(2+) serves as cofactor.

The enzyme catalyses 2-[(2R,5Z)-2-carboxy-4-methylthiazol-5(2H)-ylidene]ethyl phosphate + 4-amino-2-methyl-5-(diphosphooxymethyl)pyrimidine + 2 H(+) = thiamine phosphate + CO2 + diphosphate. It catalyses the reaction 2-(2-carboxy-4-methylthiazol-5-yl)ethyl phosphate + 4-amino-2-methyl-5-(diphosphooxymethyl)pyrimidine + 2 H(+) = thiamine phosphate + CO2 + diphosphate. It carries out the reaction 4-methyl-5-(2-phosphooxyethyl)-thiazole + 4-amino-2-methyl-5-(diphosphooxymethyl)pyrimidine + H(+) = thiamine phosphate + diphosphate. It functions in the pathway cofactor biosynthesis; thiamine diphosphate biosynthesis; thiamine phosphate from 4-amino-2-methyl-5-diphosphomethylpyrimidine and 4-methyl-5-(2-phosphoethyl)-thiazole: step 1/1. In terms of biological role, condenses 4-methyl-5-(beta-hydroxyethyl)thiazole monophosphate (THZ-P) and 2-methyl-4-amino-5-hydroxymethyl pyrimidine pyrophosphate (HMP-PP) to form thiamine monophosphate (TMP). The sequence is that of Thiamine-phosphate synthase from Pseudomonas paraeruginosa (strain DSM 24068 / PA7) (Pseudomonas aeruginosa (strain PA7)).